Reading from the N-terminus, the 344-residue chain is Heat-inducible transcription repressor HrcA (344 aa).

This sequence belongs to the HrcA family.

Its function is as follows. Negative regulator of class I heat shock genes (grpE-dnaK-dnaJ and groELS operons). Prevents heat-shock induction of these operons. In Geobacillus stearothermophilus (Bacillus stearothermophilus), this protein is Heat-inducible transcription repressor HrcA.